A 272-amino-acid chain; its full sequence is Type III pantothenate kinase (272 aa).

6–13 serves as a coordination point for ATP; that stretch reads DVRNTHTV. Residue 109–112 coordinates substrate; sequence GADR. The active-site Proton acceptor is D111. D131 serves as a coordination point for K(+). ATP is bound at residue S134. T186 contacts substrate.

Belongs to the type III pantothenate kinase family. As to quaternary structure, homodimer. The cofactor is NH4(+). K(+) is required as a cofactor.

It localises to the cytoplasm. The enzyme catalyses (R)-pantothenate + ATP = (R)-4'-phosphopantothenate + ADP + H(+). Its pathway is cofactor biosynthesis; coenzyme A biosynthesis; CoA from (R)-pantothenate: step 1/5. In terms of biological role, catalyzes the phosphorylation of pantothenate (Pan), the first step in CoA biosynthesis. In Mycobacterium bovis (strain BCG / Pasteur 1173P2), this protein is Type III pantothenate kinase.